A 154-amino-acid polypeptide reads, in one-letter code: Ecotin-like protein 2 (154 aa).

Belongs to the protease inhibitor I11 (ecotin) family.

The polypeptide is Ecotin-like protein 2 (Leishmania braziliensis).